The primary structure comprises 275 residues: WIMGHMVNAIEQVDEFLDLGANAIEFDVDFDDDGVAKYTHHGIPCDCGRLCTKYAVFTEYLDYVRQVTTPGDPKFRKELVLLALDLKLQRISSEKAYAAGVDVATKLLDHYWMRGWNGGRAYILLNIPLVEDYEFIRAFKDTLRKEGHEQYNAKVGINFTGNEDLDEIREVLEKLGEDEHIWQADGITSCFPRGTERLKKALEKRDTPGYKYISKVYAWTLVRSSIMRRSLRLGVDGVMSNYPDSVVKVLKEKEFSDKFRLATYADNPWEKFTPI.

The active site involves His-5. The Mg(2+) site is built by Glu-25 and Asp-27. His-41 functions as the Nucleophile in the catalytic mechanism. 2 disulfides stabilise this stretch: Cys-45–Cys-51 and Cys-47–Cys-190. Mg(2+) is bound at residue Asp-85.

Belongs to the arthropod phospholipase D family. Class II subfamily. The cofactor is Mg(2+). Expressed by the venom gland.

The protein resides in the secreted. It carries out the reaction an N-(acyl)-sphingosylphosphocholine = an N-(acyl)-sphingosyl-1,3-cyclic phosphate + choline. The enzyme catalyses an N-(acyl)-sphingosylphosphoethanolamine = an N-(acyl)-sphingosyl-1,3-cyclic phosphate + ethanolamine. The catalysed reaction is a 1-acyl-sn-glycero-3-phosphocholine = a 1-acyl-sn-glycero-2,3-cyclic phosphate + choline. It catalyses the reaction a 1-acyl-sn-glycero-3-phosphoethanolamine = a 1-acyl-sn-glycero-2,3-cyclic phosphate + ethanolamine. Functionally, dermonecrotic toxins cleave the phosphodiester linkage between the phosphate and headgroup of certain phospholipids (sphingolipid and lysolipid substrates), forming an alcohol (often choline) and a cyclic phosphate. This toxin acts on sphingomyelin (SM). It may also act on ceramide phosphoethanolamine (CPE), lysophosphatidylcholine (LPC) and lysophosphatidylethanolamine (LPE), but not on lysophosphatidylserine (LPS), and lysophosphatidylglycerol (LPG). It acts by transphosphatidylation, releasing exclusively cyclic phosphate products as second products. Induces dermonecrosis, hemolysis, increased vascular permeability, edema, inflammatory response, and platelet aggregation. This Sicarius peruensis (Six-eyed sand spider) protein is Dermonecrotic toxin SpeSicTox-betaIIA2i.